Here is a 537-residue protein sequence, read N- to C-terminus: Lysine--tRNA ligase (537 aa).

The 'HIGH' region signature appears at 30–38 (PSGNIHIGN). The 'KMSKS' region motif lies at 276–280 (AMSSS).

Belongs to the class-I aminoacyl-tRNA synthetase family.

The protein resides in the cytoplasm. It carries out the reaction tRNA(Lys) + L-lysine + ATP = L-lysyl-tRNA(Lys) + AMP + diphosphate. The sequence is that of Lysine--tRNA ligase from Methanosarcina barkeri.